A 77-amino-acid chain; its full sequence is Conotoxin Vc6b (77 aa).

An N-terminal signal peptide occupies residues 1–22 (MKLTCMMIVAVLFLTANTFVTA). Positions 23-47 (DDSGNGMENLFPKAGHEMENLEASN) are excised as a propeptide. Disulfide bonds link cysteine 52–cysteine 66, cysteine 59–cysteine 72, and cysteine 67–cysteine 76.

In terms of tissue distribution, expressed by the venom duct.

Its subcellular location is the secreted. The sequence is that of Conotoxin Vc6b from Conus victoriae (Queen Victoria cone).